Here is a 226-residue protein sequence, read N- to C-terminus: MKLQEKEVLLFDLDGTLVDSAPDLALAVNRTLKDLNKATFDQDTIHHWVGNGAKVLIERALSGSAIIDKELDETLTKDALTIFLAHYQQCLCIESVLYDDVQEGLLSLKAAGFRLAIITNKPAIFIQPILTGLGIDNLFELLIGGDTLADKKPHPAPLHYAMKQLNVVAEQCVMIGDSKNDILAAKAANIDSVGLTYGYNYGEDINQYGPQWCFDTFNELLISLKR.

Asp-12 functions as the Nucleophile in the catalytic mechanism. Mg(2+) contacts are provided by Asp-12, Asp-14, and Asp-177.

This sequence belongs to the HAD-like hydrolase superfamily. CbbY/CbbZ/Gph/YieH family. The cofactor is Mg(2+).

It carries out the reaction 2-phosphoglycolate + H2O = glycolate + phosphate. It participates in organic acid metabolism; glycolate biosynthesis; glycolate from 2-phosphoglycolate: step 1/1. Functionally, specifically catalyzes the dephosphorylation of 2-phosphoglycolate. Is involved in the dissimilation of the intracellular 2-phosphoglycolate formed during the DNA repair of 3'-phosphoglycolate ends, a major class of DNA lesions induced by oxidative stress. This chain is Phosphoglycolate phosphatase, found in Colwellia psychrerythraea (strain 34H / ATCC BAA-681) (Vibrio psychroerythus).